A 149-amino-acid polypeptide reads, in one-letter code: Protein SprT-like (149 aa).

The SprT-like domain occupies 4–143; it reads TDYVKQVSLE…CGLCRGKLLL (140 aa). His64 lines the Zn(2+) pocket. The active site involves Glu65. His68 provides a ligand contact to Zn(2+).

Belongs to the SprT family. It depends on Zn(2+) as a cofactor.

It is found in the cytoplasm. In Streptococcus pneumoniae (strain Taiwan19F-14), this protein is Protein SprT-like.